The sequence spans 453 residues: AP-4 complex subunit mu-1 (453 aa).

The MHD domain occupies 184 to 452; the sequence is KNEVFLDVVE…LSHSDAYVIR (269 aa).

It belongs to the adaptor complexes medium subunit family. Adaptor protein complex 4 (AP-4) is a heterotetramer composed of two large adaptins (epsilon-type subunit AP4E1 and beta-type subunit AP4B1), a medium adaptin (mu-type subunit AP4M1) and a small adaptin (sigma-type AP4S1). Interacts with tyrosine-based sorting signals on the cytoplasmic tail of cargo proteins such as APP, ATG9A, LAMP2 and NAGPA. Interacts with the C-terminal domain of GRID2. Interacts with GRIA1 and GRIA2; the interaction is indirect via CACNG3. Interacts with CACNG3; CACNG3 associates GRIA1 and GRIA2 with the adaptor protein complex 4 (AP-4) to target them to the somatodendritic compartment of neurons. Interacts with HOOK1 and HOOK2; the interactions are direct, mediate the interaction between FTS-Hook-FHIP (FHF) complex and AP-4 and the perinuclear distribution of AP-4. Ubiquitous. Highly expressed in testis and lowly expressed in brain and lung.

It is found in the golgi apparatus. Its subcellular location is the trans-Golgi network membrane. It localises to the early endosome. Component of the adaptor protein complex 4 (AP-4). Adaptor protein complexes are vesicle coat components involved both in vesicle formation and cargo selection. They control the vesicular transport of proteins in different trafficking pathways. AP-4 forms a non clathrin-associated coat on vesicles departing the trans-Golgi network (TGN) and may be involved in the targeting of proteins from the trans-Golgi network (TGN) to the endosomal-lysosomal system. It is also involved in protein sorting to the basolateral membrane in epithelial cells and the proper asymmetric localization of somatodendritic proteins in neurons. Within AP-4, the mu-type subunit AP4M1 is directly involved in the recognition and binding of tyrosine-based sorting signals found in the cytoplasmic part of cargos. The adaptor protein complex 4 (AP-4) may also recognize other types of sorting signal. In Homo sapiens (Human), this protein is AP-4 complex subunit mu-1.